The primary structure comprises 125 residues: Multifunctional methyltransferase subunit TRM112-like protein (125 aa).

The TRM112 domain maps to 2-119 (KLLTHNLLSS…SRGIPNMLLS (118 aa)). Phosphoserine is present on residues Ser119 and Ser125.

The protein belongs to the TRM112 family. Part of the heterodimeric BUD23-TRM112 methyltransferase complex; this heterodimerization is necessary for the metabolic stability and activity of the catalytic subunit BUD23. Part of the heterodimeric N6AMT1-TRM112 methyltransferase complex; this heterodimerization is necessary for S-adenosyl-L-methionine-binding to N6AMT1/HEMK2. Part of the heterodimeric ALKBH8-TRM112 methyltransferase complex. Part of the heterodimeric METTL5-TRM112 methyltransferase complex; this heterodimerization is necessary for the stability of the catalytic subunit METTL5. Part of the heterodimeric THUMPD3-TRM112 methyltransferase complex; this complex forms an active tRNA methyltransferase, where TRMT112 acts as an activator of the catalytic subunit THUMPD3. Part of the heterodimeric THUMPD2-TRM112 methyltransferase complex; this complex forms an active tRNA methyltransferase, where TRMT112 acts as an activator of the catalytic subunit THUMPD2. Part of the heterodimeric TRMT11-TRM112 methyltransferase complex; this complex forms an active tRNA methyltransferase, where TRMT112 acts as an activator of the catalytic subunit TRMT11.

The protein localises to the nucleus. It localises to the nucleoplasm. The protein resides in the cytoplasm. Its subcellular location is the perinuclear region. In terms of biological role, acts as an activator of both rRNA/tRNA and protein methyltransferases. Together with methyltransferase BUD23, methylates the N(7) position of a guanine in 18S rRNA. The heterodimer with N6AMT1/HEMK2 catalyzes N5-methylation of ETF1 on 'Gln-185', using S-adenosyl L-methionine as methyl donor. The heterodimer with N6AMT1/HEMK2 also monomethylates 'Lys-12' of histone H4 (H4K12me1). The heterodimer with ALKBH8 catalyzes the methylation of 5-carboxymethyl uridine to 5-methylcarboxymethyl uridine at the wobble position of the anticodon loop in target tRNA species. Together with methyltransferase THUMPD3, catalyzes the formation of N(2)-methylguanosine at position 6 in a broad range of tRNA substrates and at position 7 of tRNA(Trp). Involved in the pre-rRNA processing steps leading to small-subunit rRNA production. Together with methyltransferase METTL5, specifically methylates the 6th position of adenine in position 1832 of 18S rRNA. This is Multifunctional methyltransferase subunit TRM112-like protein from Homo sapiens (Human).